We begin with the raw amino-acid sequence, 574 residues long: Enolase 4 (574 aa).

The span at 165–175 shows a compositional bias: basic and acidic residues; it reads EKERRQMEREA. A disordered region spans residues 165–221; sequence EKERRQMEREASPMPLQPEPSPVTSPAPGKKKGSGKGKKAAVVEKPIPPEETPEAVV. A compositionally biased stretch (pro residues) spans 179–189; that stretch reads PLQPEPSPVTS. A compositionally biased stretch (basic residues) spans 193 to 203; the sequence is GKKKGSGKGKK. A substrate-binding site is contributed by Glu287. Lys467 serves as the catalytic Proton acceptor. Lys518 is a binding site for substrate.

It belongs to the enolase family.

It catalyses the reaction (2R)-2-phosphoglycerate = phosphoenolpyruvate + H2O. It participates in carbohydrate degradation; glycolysis; pyruvate from D-glyceraldehyde 3-phosphate: step 4/5. The protein is Enolase 4 (eno4) of Xenopus tropicalis (Western clawed frog).